A 504-amino-acid polypeptide reads, in one-letter code: D-alanine--D-alanyl carrier protein ligase (504 aa).

152–153 (TS) is an ATP binding site. Residue Asp-197 coordinates D-alanine. 292–297 (NTYGPT) lines the ATP pocket. Val-301 lines the D-alanine pocket. ATP-binding positions include Asp-383, 394–397 (YNGR), and Lys-492. Residue Lys-492 participates in D-alanine binding.

This sequence belongs to the ATP-dependent AMP-binding enzyme family. DltA subfamily.

It is found in the cytoplasm. The catalysed reaction is holo-[D-alanyl-carrier protein] + D-alanine + ATP = D-alanyl-[D-alanyl-carrier protein] + AMP + diphosphate. It functions in the pathway cell wall biogenesis; lipoteichoic acid biosynthesis. Its function is as follows. Catalyzes the first step in the D-alanylation of lipoteichoic acid (LTA), the activation of D-alanine and its transfer onto the D-alanyl carrier protein (Dcp) DltC. In an ATP-dependent two-step reaction, forms a high energy D-alanyl-AMP intermediate, followed by transfer of the D-alanyl residue as a thiol ester to the phosphopantheinyl prosthetic group of the Dcp. D-alanylation of LTA plays an important role in modulating the properties of the cell wall in Gram-positive bacteria, influencing the net charge of the cell wall. This Bacillus cereus (strain Q1) protein is D-alanine--D-alanyl carrier protein ligase.